Consider the following 191-residue polypeptide: MHNFTDMRDENSHDEIWLVEHYPVFTQGQAGKAEHILMPGDIPVVQSDRGGQVTYHGPGQQVMYVLLNLKRRKLGVRDLVTLLEQTVVNTLAEIGIEAHPRADAPGVYVGEKKICSLGLRIRRGCSFHGLALNVNMDLSPFLRINPCGYAGMEMAKITQWKEDATTDNIAPRLLANILALLNNPPYEYIAA.

The BPL/LPL catalytic domain occupies 10 to 185; that stretch reads ENSHDEIWLV…NILALLNNPP (176 aa). Substrate-binding positions include 49–56, 116–118, and 129–131; these read RGGQVTYH, SLG, and GLA. The active-site Acyl-thioester intermediate is cysteine 147.

The protein belongs to the LipB family.

It is found in the cytoplasm. It catalyses the reaction octanoyl-[ACP] + L-lysyl-[protein] = N(6)-octanoyl-L-lysyl-[protein] + holo-[ACP] + H(+). The protein operates within protein modification; protein lipoylation via endogenous pathway; protein N(6)-(lipoyl)lysine from octanoyl-[acyl-carrier-protein]: step 1/2. In terms of biological role, catalyzes the transfer of endogenously produced octanoic acid from octanoyl-acyl-carrier-protein onto the lipoyl domains of lipoate-dependent enzymes. Lipoyl-ACP can also act as a substrate although octanoyl-ACP is likely to be the physiological substrate. This is Octanoyltransferase from Salmonella choleraesuis (strain SC-B67).